The chain runs to 159 residues: Large ribosomal subunit protein uL11 (159 aa).

It belongs to the universal ribosomal protein uL11 family. Part of the ribosomal stalk of the 50S ribosomal subunit. Interacts with L10 and the large rRNA to form the base of the stalk. L10 forms an elongated spine to which L12 dimers bind in a sequential fashion forming a multimeric L10(L12)X complex.

Forms part of the ribosomal stalk which helps the ribosome interact with GTP-bound translation factors. The chain is Large ribosomal subunit protein uL11 from Nitrosopumilus maritimus (strain SCM1).